Reading from the N-terminus, the 349-residue chain is 5-deoxyribose 1-phosphate isomerase (349 aa).

Substrate is bound by residues 49 to 51, Arg92, and Gln199; that span reads RGA. Asp240 functions as the Proton donor in the catalytic mechanism. Residue 250–251 participates in substrate binding; it reads NK.

This sequence belongs to the EIF-2B alpha/beta/delta subunits family. DrdI subfamily.

It catalyses the reaction 5-deoxy-alpha-D-ribose 1-phosphate = 5-deoxy-D-ribulose 1-phosphate. It participates in carbohydrate degradation. Catalyzes the isomerization of 5-deoxy-alpha-D-ribose 1-phosphate to 5-deoxy-D-ribulose 1-phosphate, as part of a 5-deoxyribose salvage pathway that recycles this toxic radical SAM enzyme by-product to mainstream metabolites. This chain is 5-deoxyribose 1-phosphate isomerase, found in Clostridium botulinum (strain Loch Maree / Type A3).